The following is a 383-amino-acid chain: Multidrug resistance protein MexA (383 aa).

Positions 1–23 (MQRTPAMRVLVPALLVAISALSG) are cleaved as a signal peptide. A lipid anchor (N-palmitoyl cysteine) is attached at cysteine 24. Residue cysteine 24 is the site of S-diacylglycerol cysteine attachment. Residues 97 to 151 (ATYEADYQSAQANLASTQEQAQRYKLLVADQAVSKQQYADANAAYLQSKAAVEQA) are a coiled coil.

This sequence belongs to the membrane fusion protein (MFP) (TC 8.A.1) family. Component of the MexAB-OprM multidrug efflux complex, composed of six MexA subunits forming a hexameric tube, binding to a MexB trimer, which interact with the trimeric OprM outer membrane channel protein. OprM is thought to not directly contact MexB; instead, MexA joins MexB and OprM by forming a funnel-like hexamer anchored to the inner membrane. MexA may initially form a hexameric ring complex with MexB prior to OprM, then OprM undergoes a conformational change as it contacts MexA, allowing the periplasmic gate to open. It is thought that, under high intracellular substrate concentration, MexB ejects substrate into the tunnel formed by MexA-OprM; as the substrate level declines, conformational changes in MexB cause efflux to reduce and stop and the complex shifts to the closed state. MexB subunit acts as a substrate:proton antiporter and activity is enhanced significantly when in complex with MexA and OprM, in vitro.

The protein localises to the cell inner membrane. With respect to regulation, export of antibiotics and solvents is dramatically decreased in the presence of the protonophore carbonyl cyanide m-chlorophenylhydrazone (CCCP), therefore may be driven by a proton gradient. Antibiotic efflux is inhibited by pyridopyrimidine derivatives, such as ABI-PP, acting by binding to a hydrophobic pocket in MexB. In terms of biological role, the periplasmic linker component of the MexAB-OprM efflux system that confers multidrug resistance. Functions as the major efflux pump for n-hexane and p-xylene efflux. Has been shown in one study to be involved in the active efflux of the autoinducer N-(3-oxododecanoyl) homoserine lactone, thereby playing an indirect role in quorum-sensing; but has been shown in another study not to be involved in efflux of this autoinducer. Over-expression of the pump increases antibiotic and solvent efflux capacities. Implicated in the secretion of the siderophore pyoverdine. This Pseudomonas aeruginosa (strain ATCC 15692 / DSM 22644 / CIP 104116 / JCM 14847 / LMG 12228 / 1C / PRS 101 / PAO1) protein is Multidrug resistance protein MexA (mexA).